The primary structure comprises 158 residues: Fucolectin (158 aa).

Residues 16–148 (KATQSAQLRG…TSESLHLCEV (133 aa)) are F5/8 type C-like. Residues Asn-35, Asp-38, Asn-40, and Ser-49 each coordinate Ca(2+). Intrachain disulfides connect Cys-50-Cys-146, Cys-82-Cys-83, and Cys-108-Cys-124. His-52 and Arg-79 together coordinate alpha-L-fucose. The short motif at 79–81 (RGD) is the Cell attachment site element. Arg-86 contacts alpha-L-fucose. Ca(2+) is bound by residues Cys-146 and Glu-147.

Belongs to the fucolectin family. In terms of assembly, homotrimer.

The protein localises to the secreted. Its function is as follows. Acts as a defensive agent. Recognizes blood group fucosylated oligosaccharides including A, B, H and Lewis B-type antigens. Does not recognize Lewis A antigen and has low affinity for monovalent haptens. The protein is Fucolectin of Anguilla anguilla (European freshwater eel).